A 375-amino-acid chain; its full sequence is Anhydro-N-acetylmuramic acid kinase (375 aa).

Residue 13-20 coordinates ATP; sequence GTSMDGVD.

The protein belongs to the anhydro-N-acetylmuramic acid kinase family.

It carries out the reaction 1,6-anhydro-N-acetyl-beta-muramate + ATP + H2O = N-acetyl-D-muramate 6-phosphate + ADP + H(+). Its pathway is amino-sugar metabolism; 1,6-anhydro-N-acetylmuramate degradation. It functions in the pathway cell wall biogenesis; peptidoglycan recycling. Functionally, catalyzes the specific phosphorylation of 1,6-anhydro-N-acetylmuramic acid (anhMurNAc) with the simultaneous cleavage of the 1,6-anhydro ring, generating MurNAc-6-P. Is required for the utilization of anhMurNAc either imported from the medium or derived from its own cell wall murein, and thus plays a role in cell wall recycling. The protein is Anhydro-N-acetylmuramic acid kinase of Pelagibacter ubique (strain HTCC1062).